We begin with the raw amino-acid sequence, 513 residues long: RNA-splicing ligase RtcB homolog (513 aa).

The Mn(2+) site is built by aspartate 127, cysteine 130, histidine 235, histidine 267, and histidine 361. A GMP-binding site is contributed by 234 to 238; the sequence is NHYAE. GMP is bound by residues 361–362, 410–413, serine 417, 436–439, and lysine 512; these read HN, GGTM, and HGAG. The active-site GMP-histidine intermediate is the histidine 436.

The protein belongs to the RtcB family. In terms of assembly, catalytic component of the tRNA-splicing ligase complex. It depends on Mn(2+) as a cofactor.

It catalyses the reaction a 3'-end 3'-phospho-ribonucleotide-RNA + a 5'-end dephospho-ribonucleoside-RNA + GTP = a ribonucleotidyl-ribonucleotide-RNA + GMP + diphosphate. It carries out the reaction a 3'-end 2',3'-cyclophospho-ribonucleotide-RNA + a 5'-end dephospho-ribonucleoside-RNA + GTP + H2O = a ribonucleotidyl-ribonucleotide-RNA + GMP + diphosphate + H(+). In terms of biological role, catalytic subunit of the tRNA-splicing ligase complex that acts by directly joining spliced tRNA halves to mature-sized tRNAs by incorporating the precursor-derived splice junction phosphate into the mature tRNA as a canonical 3',5'-phosphodiester. May act as an RNA ligase with broad substrate specificity, and may function toward other RNAs. This Micromonas commoda (strain RCC299 / NOUM17 / CCMP2709) (Picoplanktonic green alga) protein is RNA-splicing ligase RtcB homolog.